The sequence spans 233 residues: 2-C-methyl-D-erythritol 4-phosphate cytidylyltransferase (233 aa).

Belongs to the IspD/TarI cytidylyltransferase family. IspD subfamily.

It catalyses the reaction 2-C-methyl-D-erythritol 4-phosphate + CTP + H(+) = 4-CDP-2-C-methyl-D-erythritol + diphosphate. It participates in isoprenoid biosynthesis; isopentenyl diphosphate biosynthesis via DXP pathway; isopentenyl diphosphate from 1-deoxy-D-xylulose 5-phosphate: step 2/6. Catalyzes the formation of 4-diphosphocytidyl-2-C-methyl-D-erythritol from CTP and 2-C-methyl-D-erythritol 4-phosphate (MEP). The sequence is that of 2-C-methyl-D-erythritol 4-phosphate cytidylyltransferase from Carboxydothermus hydrogenoformans (strain ATCC BAA-161 / DSM 6008 / Z-2901).